A 93-amino-acid polypeptide reads, in one-letter code: Small ribosomal subunit protein bS18c (93 aa).

Belongs to the bacterial ribosomal protein bS18 family. In terms of assembly, part of the 30S ribosomal subunit.

The protein localises to the plastid. The protein resides in the chloroplast. The sequence is that of Small ribosomal subunit protein bS18c from Pinus koraiensis (Korean pine).